A 647-amino-acid chain; its full sequence is Threonine--tRNA ligase (647 aa).

A TGS domain is found at 1–61; sequence MINITFPDGA…TEDGSIEIVT (61 aa). The segment at 242–540 is catalytic; the sequence is DHRKLGKELD…LIENYKGAFP (299 aa). Residues cysteine 336, histidine 387, and histidine 517 each coordinate Zn(2+).

The protein belongs to the class-II aminoacyl-tRNA synthetase family. Homodimer. The cofactor is Zn(2+).

It localises to the cytoplasm. The catalysed reaction is tRNA(Thr) + L-threonine + ATP = L-threonyl-tRNA(Thr) + AMP + diphosphate + H(+). Catalyzes the attachment of threonine to tRNA(Thr) in a two-step reaction: L-threonine is first activated by ATP to form Thr-AMP and then transferred to the acceptor end of tRNA(Thr). Also edits incorrectly charged L-seryl-tRNA(Thr). This Streptococcus pneumoniae serotype 2 (strain D39 / NCTC 7466) protein is Threonine--tRNA ligase.